Reading from the N-terminus, the 258-residue chain is Tegument protein VP22 (258 aa).

The tract at residues 66 to 143 (VQPAARGRDR…RAPPGANAVA (78 aa)) is disordered. A compositionally biased stretch (low complexity) spans 77-118 (AAAGTTVAAPAAAPARRSSSRASSRPPRAAADPPVLRPATRG). The Nuclear localization signal motif lies at 131–134 (PRPR). The Nuclear export signal motif lies at 204-216 (LDRMLKSAAIRIL). The disordered stretch occupies residues 234-258 (RAQRPAARGSTSGGESRLRGERARP). Basic and acidic residues predominate over residues 249-258 (SRLRGERARP).

The protein belongs to the alphaherpesvirinae VP22 tegument protein family. Interacts with gE (via C-terminus); this interaction is necessary for the recruitment of VP22 to the Golgi and its packaging into virions. Interacts with gM (via C-terminus). Interacts with VP16; this interaction allows the formation of a tripartite complex composed of VP16, VP22 and UL41/VHS. Interacts with the capsid-binding protein UL16. Interacts with host CGAS. Highly phosphorylated in the host cell. Packaging is selective for underphosphorylated forms.

The protein localises to the virion tegument. It is found in the host cytoplasm. Its subcellular location is the host nucleus. It localises to the host Golgi apparatus. Its function is as follows. Tegument protein that plays different roles during the time course of infection. Participates in both the accumulation of viral mRNAs and viral protein translation at late time of infection. Modulates the RNase activity of the virion host shutoff protein UL41 probably to ensure necessary levels of key cellular mRNAs and proteins. Plays a role in microtubule reorganization that occurs after viral infection by stabilizing microtubule network. Plays a role in the inhibition of host innate immune system by targeting the CGAS enzymatic activity which is the principal cytosolic DNA sensor that detects invading viral DNA. Acts by mediating disruption of liquid-like droplets in which CGAS is activated, thereby preventing CGAS activity. The polypeptide is Tegument protein VP22 (Bovine herpesvirus 1.1 (strain Cooper) (BoHV-1)).